We begin with the raw amino-acid sequence, 270 residues long: Metallo-beta-lactamase type 2 (270 aa).

The signal sequence occupies residues 1 to 28 (MELPNIMHPVAKLSTALAAALMLSGCMP). H120, H122, D124, H189, and C208 together coordinate Zn(2+). K211 and N220 together coordinate substrate. H250 contributes to the Zn(2+) binding site.

The protein belongs to the metallo-beta-lactamase superfamily. Class-B beta-lactamase family. Monomer. Zn(2+) serves as cofactor.

It is found in the periplasm. The enzyme catalyses a beta-lactam + H2O = a substituted beta-amino acid. With respect to regulation, inhibits by captopril, thiorphan, dimercaprol and tiopronin. This enzyme is not susceptible to inactivation by the beta-lactamase-blocking agents clavulanic acid. Confers resistance to the different beta-lactams antibiotics (penicillin, cephalosporin and carbapenem) via the hydrolysis of the beta-lactam ring. Does not confer resistance to the polymixin colistin or the fluoroquinolone ciprofloxacin. This is Metallo-beta-lactamase type 2 from Klebsiella pneumoniae.